Consider the following 164-residue polypeptide: Putative protein ZNF321 (164 aa).

This chain is Putative protein ZNF321 (ZNF321P), found in Homo sapiens (Human).